We begin with the raw amino-acid sequence, 457 residues long: tRNA modification GTPase MnmE (457 aa).

Residues R25, E87, and R126 each contribute to the (6S)-5-formyl-5,6,7,8-tetrahydrofolate site. Residues 223–377 (GISTAIIGRP…IEERINNLFF (155 aa)) enclose the TrmE-type G domain. K(+) is bound at residue N233. GTP-binding positions include 233 to 238 (NVGKSS), 252 to 258 (TDIAGTT), and 277 to 280 (DTAG). Residue S237 participates in Mg(2+) binding. The K(+) site is built by T252, I254, and T257. T258 provides a ligand contact to Mg(2+). K457 provides a ligand contact to (6S)-5-formyl-5,6,7,8-tetrahydrofolate.

The protein belongs to the TRAFAC class TrmE-Era-EngA-EngB-Septin-like GTPase superfamily. TrmE GTPase family. In terms of assembly, homodimer. Heterotetramer of two MnmE and two MnmG subunits. It depends on K(+) as a cofactor.

Its subcellular location is the cytoplasm. Exhibits a very high intrinsic GTPase hydrolysis rate. Involved in the addition of a carboxymethylaminomethyl (cmnm) group at the wobble position (U34) of certain tRNAs, forming tRNA-cmnm(5)s(2)U34. This Streptococcus pneumoniae serotype 2 (strain D39 / NCTC 7466) protein is tRNA modification GTPase MnmE.